Consider the following 815-residue polypeptide: Phenylalanine--tRNA ligase beta subunit (815 aa).

The tRNA-binding domain occupies 39–153 (ASHAQGVVVG…NVPDLGQPVG (115 aa)). In terms of domain architecture, B5 spans 414–498 (KSAEPVKLRR…RLVGFDRFEA (85 aa)). Mg(2+) contacts are provided by aspartate 476, aspartate 482, glutamate 485, and glutamate 486. The FDX-ACB domain maps to 721–814 (PTVPAMELDL…LVKQFSAELR (94 aa)).

It belongs to the phenylalanyl-tRNA synthetase beta subunit family. Type 1 subfamily. As to quaternary structure, tetramer of two alpha and two beta subunits. Mg(2+) is required as a cofactor.

It is found in the cytoplasm. The enzyme catalyses tRNA(Phe) + L-phenylalanine + ATP = L-phenylalanyl-tRNA(Phe) + AMP + diphosphate + H(+). In Prochlorococcus marinus (strain MIT 9313), this protein is Phenylalanine--tRNA ligase beta subunit.